A 160-amino-acid chain; its full sequence is ATP synthase subunit b (160 aa).

A helical membrane pass occupies residues 15-35; it reads LVIVIGLLFWFLRGFLGGILE.

The protein belongs to the ATPase B chain family. In terms of assembly, F-type ATPases have 2 components, F(1) - the catalytic core - and F(0) - the membrane proton channel. F(1) has five subunits: alpha(3), beta(3), gamma(1), delta(1), epsilon(1). F(0) has four main subunits: a(1), b(1), b'(1) and c(10-14). The alpha and beta chains form an alternating ring which encloses part of the gamma chain. F(1) is attached to F(0) by a central stalk formed by the gamma and epsilon chains, while a peripheral stalk is formed by the delta, b and b' chains.

The protein localises to the cellular thylakoid membrane. Its function is as follows. F(1)F(0) ATP synthase produces ATP from ADP in the presence of a proton or sodium gradient. F-type ATPases consist of two structural domains, F(1) containing the extramembraneous catalytic core and F(0) containing the membrane proton channel, linked together by a central stalk and a peripheral stalk. During catalysis, ATP synthesis in the catalytic domain of F(1) is coupled via a rotary mechanism of the central stalk subunits to proton translocation. In terms of biological role, component of the F(0) channel, it forms part of the peripheral stalk, linking F(1) to F(0). In Synechococcus sp. (strain CC9605), this protein is ATP synthase subunit b.